Consider the following 492-residue polypeptide: Bifunctional purine biosynthesis protein PurH (492 aa).

In terms of domain architecture, MGS-like spans 1-144 (MKKAILSVSN…KNYKHVTTIV (144 aa)).

The protein belongs to the PurH family.

It catalyses the reaction (6R)-10-formyltetrahydrofolate + 5-amino-1-(5-phospho-beta-D-ribosyl)imidazole-4-carboxamide = 5-formamido-1-(5-phospho-D-ribosyl)imidazole-4-carboxamide + (6S)-5,6,7,8-tetrahydrofolate. The enzyme catalyses IMP + H2O = 5-formamido-1-(5-phospho-D-ribosyl)imidazole-4-carboxamide. It functions in the pathway purine metabolism; IMP biosynthesis via de novo pathway; 5-formamido-1-(5-phospho-D-ribosyl)imidazole-4-carboxamide from 5-amino-1-(5-phospho-D-ribosyl)imidazole-4-carboxamide (10-formyl THF route): step 1/1. It participates in purine metabolism; IMP biosynthesis via de novo pathway; IMP from 5-formamido-1-(5-phospho-D-ribosyl)imidazole-4-carboxamide: step 1/1. The sequence is that of Bifunctional purine biosynthesis protein PurH from Staphylococcus aureus (strain Newman).